A 236-amino-acid polypeptide reads, in one-letter code: 2,3,4,5-tetrahydropyridine-2,6-dicarboxylate N-acetyltransferase (236 aa).

This sequence belongs to the transferase hexapeptide repeat family. DapH subfamily.

It carries out the reaction (S)-2,3,4,5-tetrahydrodipicolinate + acetyl-CoA + H2O = L-2-acetamido-6-oxoheptanedioate + CoA. Its pathway is amino-acid biosynthesis; L-lysine biosynthesis via DAP pathway; LL-2,6-diaminopimelate from (S)-tetrahydrodipicolinate (acetylase route): step 1/3. Functionally, catalyzes the transfer of an acetyl group from acetyl-CoA to tetrahydrodipicolinate. This is 2,3,4,5-tetrahydropyridine-2,6-dicarboxylate N-acetyltransferase from Geobacillus thermodenitrificans (strain NG80-2).